A 286-amino-acid polypeptide reads, in one-letter code: Pyridoxal kinase PdxY (286 aa).

Substrate contacts are provided by residues serine 9 and 44–45 (TQ). ATP-binding positions include aspartate 111, alanine 143, glutamate 148, lysine 181, and 208 to 211 (RPLV). Residue aspartate 223 participates in substrate binding.

The protein belongs to the pyridoxine kinase family. PdxY subfamily. Homodimer. The cofactor is Mg(2+).

It carries out the reaction pyridoxal + ATP = pyridoxal 5'-phosphate + ADP + H(+). The protein operates within cofactor metabolism; pyridoxal 5'-phosphate salvage; pyridoxal 5'-phosphate from pyridoxal: step 1/1. In terms of biological role, pyridoxal kinase involved in the salvage pathway of pyridoxal 5'-phosphate (PLP). Catalyzes the phosphorylation of pyridoxal to PLP. The sequence is that of Pyridoxal kinase PdxY from Salmonella choleraesuis (strain SC-B67).